The following is a 554-amino-acid chain: Phenylalanine--tRNA ligase beta subunit (554 aa).

One can recognise a B5 domain in the interval 276–351 (LTPKSRMISV…INYGYEKFEG (76 aa)). Residues aspartate 329, aspartate 335, glutamate 338, and glutamate 339 each contribute to the Mg(2+) site.

Belongs to the phenylalanyl-tRNA synthetase beta subunit family. Type 2 subfamily. In terms of assembly, tetramer of two alpha and two beta subunits. Mg(2+) is required as a cofactor.

Its subcellular location is the cytoplasm. It carries out the reaction tRNA(Phe) + L-phenylalanine + ATP = L-phenylalanyl-tRNA(Phe) + AMP + diphosphate + H(+). In Methanococcus maripaludis (strain C6 / ATCC BAA-1332), this protein is Phenylalanine--tRNA ligase beta subunit.